Reading from the N-terminus, the 129-residue chain is Protein HMF1 (129 aa).

Lysine 52 participates in a covalent cross-link: Glycyl lysine isopeptide (Lys-Gly) (interchain with G-Cter in ubiquitin).

It belongs to the RutC family.

It is found in the cytoplasm. The protein localises to the nucleus. The protein resides in the mitochondrion intermembrane space. This is Protein HMF1 (HMF1) from Saccharomyces cerevisiae (strain ATCC 204508 / S288c) (Baker's yeast).